We begin with the raw amino-acid sequence, 209 residues long: Small ribosomal subunit protein uS3 (209 aa).

The KH type-2 domain maps to 38-107 (IRNFIKKNYN…KFGIDIIELK (70 aa)).

The protein belongs to the universal ribosomal protein uS3 family. As to quaternary structure, part of the 30S ribosomal subunit. Forms a tight complex with proteins S10 and S14.

Its function is as follows. Binds the lower part of the 30S subunit head. Binds mRNA in the 70S ribosome, positioning it for translation. In Fervidobacterium nodosum (strain ATCC 35602 / DSM 5306 / Rt17-B1), this protein is Small ribosomal subunit protein uS3.